We begin with the raw amino-acid sequence, 131 residues long: Small ribosomal subunit protein uS8 (131 aa).

This sequence belongs to the universal ribosomal protein uS8 family. Part of the 30S ribosomal subunit. Contacts proteins S5 and S12.

Functionally, one of the primary rRNA binding proteins, it binds directly to 16S rRNA central domain where it helps coordinate assembly of the platform of the 30S subunit. This Dictyoglomus turgidum (strain DSM 6724 / Z-1310) protein is Small ribosomal subunit protein uS8.